Consider the following 394-residue polypeptide: HORMA domain-containing protein 1 (394 aa).

The region spanning 24–226 (QQSLVLVKRL…TPFHTFKVKV (203 aa)) is the HORMA domain. The interval 306-394 (KESPELSISH…RKFSEPKEHI (89 aa)) is disordered. The segment covering 311–325 (LSISHSQVEQLVSKT) has biased composition (polar residues). Residues 353–362 (KSKESRKRSQ) are compositionally biased toward basic and acidic residues. A Phosphoserine modification is found at S376. A Nuclear localization signal motif is present at residues 383-386 (KRRK).

Interacts with HORMAD2. Interacts with IHO1. Post-translationally, phosphorylated at Ser-377 in a SPO11-dependent manner.

It localises to the nucleus. The protein resides in the chromosome. Plays a key role in meiotic progression. Regulates 3 different functions during meiosis: ensures that sufficient numbers of processed DNA double-strand breaks (DSBs) are available for successful homology search by increasing the steady-state numbers of single-stranded DSB ends. Promotes synaptonemal-complex formation independently of its role in homology search. Plays a key role in the male mid-pachytene checkpoint and the female meiotic prophase checkpoint: required for efficient build-up of ATR activity on unsynapsed chromosome regions, a process believed to form the basis of meiotic silencing of unsynapsed chromatin (MSUC) and meiotic prophase quality control in both sexes. This is HORMA domain-containing protein 1 (HORMAD1) from Sus scrofa (Pig).